The primary structure comprises 232 residues: Phosphatidylserine decarboxylase proenzyme (232 aa).

Ser-190 functions as the Schiff-base intermediate with substrate; via pyruvic acid in the catalytic mechanism. The residue at position 190 (Ser-190) is a Pyruvic acid (Ser); by autocatalysis.

It belongs to the phosphatidylserine decarboxylase family. PSD-A subfamily. Heterodimer of a large membrane-associated beta subunit and a small pyruvoyl-containing alpha subunit. It depends on pyruvate as a cofactor. Post-translationally, is synthesized initially as an inactive proenzyme. Formation of the active enzyme involves a self-maturation process in which the active site pyruvoyl group is generated from an internal serine residue via an autocatalytic post-translational modification. Two non-identical subunits are generated from the proenzyme in this reaction, and the pyruvate is formed at the N-terminus of the alpha chain, which is derived from the carboxyl end of the proenzyme. The post-translation cleavage follows an unusual pathway, termed non-hydrolytic serinolysis, in which the side chain hydroxyl group of the serine supplies its oxygen atom to form the C-terminus of the beta chain, while the remainder of the serine residue undergoes an oxidative deamination to produce ammonia and the pyruvoyl prosthetic group on the alpha chain.

Its subcellular location is the cell membrane. It catalyses the reaction a 1,2-diacyl-sn-glycero-3-phospho-L-serine + H(+) = a 1,2-diacyl-sn-glycero-3-phosphoethanolamine + CO2. The protein operates within phospholipid metabolism; phosphatidylethanolamine biosynthesis; phosphatidylethanolamine from CDP-diacylglycerol: step 2/2. Functionally, catalyzes the formation of phosphatidylethanolamine (PtdEtn) from phosphatidylserine (PtdSer). This Allorhizobium ampelinum (strain ATCC BAA-846 / DSM 112012 / S4) (Agrobacterium vitis (strain S4)) protein is Phosphatidylserine decarboxylase proenzyme.